A 246-amino-acid polypeptide reads, in one-letter code: Dihydroorotate dehydrogenase B (NAD(+)), electron transfer subunit (246 aa).

The region spanning 3-95 (MEYFKGKVKE…IGPLGNGFDI (93 aa)) is the FAD-binding FR-type domain. FAD contacts are provided by residues 48–51 (RPIS) and 70–71 (GT). [2Fe-2S] cluster is bound by residues Cys213, Cys218, Cys221, and Cys233.

The protein belongs to the PyrK family. Heterotetramer of 2 PyrK and 2 PyrD type B subunits. It depends on [2Fe-2S] cluster as a cofactor. Requires FAD as cofactor.

The protein operates within pyrimidine metabolism; UMP biosynthesis via de novo pathway; orotate from (S)-dihydroorotate (NAD(+) route): step 1/1. Functionally, responsible for channeling the electrons from the oxidation of dihydroorotate from the FMN redox center in the PyrD type B subunit to the ultimate electron acceptor NAD(+). The polypeptide is Dihydroorotate dehydrogenase B (NAD(+)), electron transfer subunit (Clostridium perfringens (strain 13 / Type A)).